We begin with the raw amino-acid sequence, 230 residues long: Orotidine 5'-phosphate decarboxylase (230 aa).

Substrate contacts are provided by residues D11, K34, 61–70 (DLKLHDIPNT), T117, R179, Q188, G208, and R209. K63 (proton donor) is an active-site residue.

The protein belongs to the OMP decarboxylase family. Type 1 subfamily. Homodimer.

It catalyses the reaction orotidine 5'-phosphate + H(+) = UMP + CO2. It functions in the pathway pyrimidine metabolism; UMP biosynthesis via de novo pathway; UMP from orotate: step 2/2. Catalyzes the decarboxylation of orotidine 5'-monophosphate (OMP) to uridine 5'-monophosphate (UMP). This chain is Orotidine 5'-phosphate decarboxylase, found in Streptococcus pyogenes serotype M1.